We begin with the raw amino-acid sequence, 210 residues long: Somatotropin (210 aa).

The signal sequence occupies residues methionine 1–alanine 22. Zn(2+) is bound at residue histidine 38. A disulfide bond links cysteine 71 and cysteine 183. Zn(2+) is bound at residue glutamate 192. Cysteines 200 and 208 form a disulfide.

The protein belongs to the somatotropin/prolactin family.

It localises to the secreted. In terms of biological role, growth hormone plays an important role in growth control and is involved in the regulation of several anabolic processes. Implicated as an osmoregulatory substance important for seawater adaptation. The sequence is that of Somatotropin (gh) from Misgurnus mizolepis (Chinese weatherloach).